We begin with the raw amino-acid sequence, 733 residues long: Lanosterol synthase (733 aa).

Thr-2 is modified (N-acetylthreonine). Residues Arg-125 to Gly-166 form a PFTB 1 repeat. The active-site Proton donor is the Asp-456. 3 PFTB repeats span residues Leu-484–Tyr-529, Leu-561–Gly-601, and Val-613–Cys-654.

It belongs to the terpene cyclase/mutase family. In terms of assembly, monomer.

Its subcellular location is the endoplasmic reticulum membrane. It catalyses the reaction (S)-2,3-epoxysqualene = lanosterol. Its pathway is terpene metabolism; lanosterol biosynthesis; lanosterol from farnesyl diphosphate: step 3/3. In terms of biological role, key enzyme in the cholesterol biosynthesis pathway. Catalyzes the cyclization of (S)-2,3 oxidosqualene to lanosterol, a reaction that forms the sterol nucleus. Through the production of lanosterol may regulate lens protein aggregation and increase transparency. This chain is Lanosterol synthase, found in Mus musculus (Mouse).